Reading from the N-terminus, the 431-residue chain is Polyprenol-phosphate-mannose-dependent alpha-(1-2)-phosphatidylinositol pentamannoside mannosyltransferase (431 aa).

10 helical membrane-spanning segments follow: residues Ala43–Pro63, Phe108–Trp128, Gly148–Ile168, Phe175–Pro195, Leu202–Val222, Ala229–Gly249, Gly290–Trp310, Leu332–Ile352, Ile364–Ala384, and Leu397–Ala417.

Belongs to the glycosyltransferase 87 family.

The protein resides in the cell membrane. It participates in phospholipid metabolism; phosphatidylinositol metabolism. Catalyzes the alpha-1,2 addition of a mannose residue from polyprenol-phosphate-mannose (PPM) to a monoacyl phosphatidylinositol tetramannoside (AcPIM4) to generate a monoacyl phosphatidylinositol pentamannoside (AcPIM5). In Mycobacterium tuberculosis (strain CDC 1551 / Oshkosh), this protein is Polyprenol-phosphate-mannose-dependent alpha-(1-2)-phosphatidylinositol pentamannoside mannosyltransferase (pimE).